The sequence spans 337 residues: Casein kinase II subunit alpha (337 aa).

Residues 47–332 form the Protein kinase domain; sequence YEIIRKIGRG…TREAMEHPYF (286 aa). ATP-binding positions include 53–61 and Lys76; that span reads IGRGKYSEV. The Proton acceptor role is filled by Asp164.

This sequence belongs to the protein kinase superfamily. CMGC Ser/Thr protein kinase family. CK2 subfamily. In terms of assembly, tetramer of two alpha and two beta chains.

The enzyme catalyses L-seryl-[protein] + ATP = O-phospho-L-seryl-[protein] + ADP + H(+). It catalyses the reaction L-threonyl-[protein] + ATP = O-phospho-L-threonyl-[protein] + ADP + H(+). Casein kinases are operationally defined by their preferential utilization of acidic proteins such as caseins as substrates. The alpha chain contains the catalytic site. The chain is Casein kinase II subunit alpha (casK) from Dictyostelium discoideum (Social amoeba).